Consider the following 37-residue polypeptide: M-oxotoxin-Ot2a (37 aa).

Expressed by the venom gland.

Its subcellular location is the secreted. In terms of biological role, disrupts biological membranes, particularly those rich in phosphocholine. Has antimicrobial activity against Gram-negative bacterium E.coli, Gram-positive bacteria B.subtilis and S.aureus, and hemolytic activity against sheep, pig and guinea pig red blood cells. Has insecticidal activity against S.frugiperda ovarian cells by opening non-selective ion channels. Enhances the insecticidal activity of spider venom neurotoxic peptides. This is M-oxotoxin-Ot2a from Oxyopes takobius (Lynx spider).